The chain runs to 428 residues: 5'-nucleotidase domain-containing protein 4 (428 aa).

The Nucleophile role is filled by Asp22. 3 residues coordinate Mg(2+): Asp22, Asp24, and Asp317. Residue Asp24 is the Proton donor of the active site.

The protein belongs to the 5'(3')-deoxyribonucleotidase family.

This Homo sapiens (Human) protein is 5'-nucleotidase domain-containing protein 4 (NT5DC4).